Here is a 352-residue protein sequence, read N- to C-terminus: Holliday junction branch migration complex subunit RuvB (352 aa).

The large ATPase domain (RuvB-L) stretch occupies residues 4–185; it reads PDRLISAVSG…FGIVQRLEFY (182 aa). ATP is bound by residues I24, R25, G66, K69, T70, T71, 132 to 134, R175, Y185, and R222; that span reads EDF. T70 contacts Mg(2+). Residues 186–256 form a small ATPAse domain (RuvB-S) region; it reads NVEDLATIVS…IADKALNLLD (71 aa). Residues 259 to 352 form a head domain (RuvB-H) region; it reads ERGFDHLDRR…TDLFTSEDGN (94 aa). R295, R314, and R319 together coordinate DNA.

It belongs to the RuvB family. Homohexamer. Forms an RuvA(8)-RuvB(12)-Holliday junction (HJ) complex. HJ DNA is sandwiched between 2 RuvA tetramers; dsDNA enters through RuvA and exits via RuvB. An RuvB hexamer assembles on each DNA strand where it exits the tetramer. Each RuvB hexamer is contacted by two RuvA subunits (via domain III) on 2 adjacent RuvB subunits; this complex drives branch migration. In the full resolvosome a probable DNA-RuvA(4)-RuvB(12)-RuvC(2) complex forms which resolves the HJ.

The protein localises to the cytoplasm. It carries out the reaction ATP + H2O = ADP + phosphate + H(+). Its function is as follows. The RuvA-RuvB-RuvC complex processes Holliday junction (HJ) DNA during genetic recombination and DNA repair, while the RuvA-RuvB complex plays an important role in the rescue of blocked DNA replication forks via replication fork reversal (RFR). RuvA specifically binds to HJ cruciform DNA, conferring on it an open structure. The RuvB hexamer acts as an ATP-dependent pump, pulling dsDNA into and through the RuvAB complex. RuvB forms 2 homohexamers on either side of HJ DNA bound by 1 or 2 RuvA tetramers; 4 subunits per hexamer contact DNA at a time. Coordinated motions by a converter formed by DNA-disengaged RuvB subunits stimulates ATP hydrolysis and nucleotide exchange. Immobilization of the converter enables RuvB to convert the ATP-contained energy into a lever motion, pulling 2 nucleotides of DNA out of the RuvA tetramer per ATP hydrolyzed, thus driving DNA branch migration. The RuvB motors rotate together with the DNA substrate, which together with the progressing nucleotide cycle form the mechanistic basis for DNA recombination by continuous HJ branch migration. Branch migration allows RuvC to scan DNA until it finds its consensus sequence, where it cleaves and resolves cruciform DNA. The polypeptide is Holliday junction branch migration complex subunit RuvB (Pseudomonas aeruginosa (strain LESB58)).